A 261-amino-acid chain; its full sequence is Probable septum site-determining protein MinC (261 aa).

The interval 106-144 is disordered; that stretch reads RAPAAKPADEAEPAAVPAVETAAAPAAAAAPEQSSDPAP. The segment covering 118 to 144 has biased composition (low complexity); sequence PAAVPAVETAAAPAAAAAPEQSSDPAP.

It belongs to the MinC family. As to quaternary structure, interacts with MinD and FtsZ.

In terms of biological role, cell division inhibitor that blocks the formation of polar Z ring septums. Rapidly oscillates between the poles of the cell to destabilize FtsZ filaments that have formed before they mature into polar Z rings. Prevents FtsZ polymerization. The chain is Probable septum site-determining protein MinC from Burkholderia orbicola (strain MC0-3).